A 144-amino-acid polypeptide reads, in one-letter code: 3-hydroxyacyl-[acyl-carrier-protein] dehydratase FabZ (144 aa).

His48 is a catalytic residue.

This sequence belongs to the thioester dehydratase family. FabZ subfamily.

The protein resides in the cytoplasm. The enzyme catalyses a (3R)-hydroxyacyl-[ACP] = a (2E)-enoyl-[ACP] + H2O. Involved in unsaturated fatty acids biosynthesis. Catalyzes the dehydration of short chain beta-hydroxyacyl-ACPs and long chain saturated and unsaturated beta-hydroxyacyl-ACPs. The polypeptide is 3-hydroxyacyl-[acyl-carrier-protein] dehydratase FabZ (Bacillus cereus (strain AH187)).